The following is a 119-amino-acid chain: Translation initiation factor 1A (119 aa).

The interval 1–24 (MSEDDVDNSVKDFESGEENEESIG) is disordered. The S1-like domain maps to 24 to 98 (GRVILPNKKK…EKADVVYRYT (75 aa)).

This sequence belongs to the eIF-1A family.

Functionally, seems to be required for maximal rate of protein biosynthesis. Enhances ribosome dissociation into subunits and stabilizes the binding of the initiator Met-tRNA(I) to 40 S ribosomal subunits. This Thermoplasma acidophilum (strain ATCC 25905 / DSM 1728 / JCM 9062 / NBRC 15155 / AMRC-C165) protein is Translation initiation factor 1A (eIF1A).